The sequence spans 146 residues: Large ribosomal subunit protein uL22 (146 aa).

The tract at residues 1–39 (MAETQTTTPKKKAERRAPPPARARKNRPAAPAPGPHASL) is disordered.

It belongs to the universal ribosomal protein uL22 family. Part of the 50S ribosomal subunit.

This protein binds specifically to 23S rRNA; its binding is stimulated by other ribosomal proteins, e.g. L4, L17, and L20. It is important during the early stages of 50S assembly. It makes multiple contacts with different domains of the 23S rRNA in the assembled 50S subunit and ribosome. Its function is as follows. The globular domain of the protein is located near the polypeptide exit tunnel on the outside of the subunit, while an extended beta-hairpin is found that lines the wall of the exit tunnel in the center of the 70S ribosome. The protein is Large ribosomal subunit protein uL22 of Anaeromyxobacter dehalogenans (strain 2CP-1 / ATCC BAA-258).